The chain runs to 379 residues: Cytochrome b (379 aa).

Helical transmembrane passes span 33 to 53 (FGSL…FLAM), 77 to 98 (WTIR…FIHV), 113 to 133 (WNVG…GYVL), and 178 to 198 (FFAL…IHLL). Positions 83 and 97 each coordinate heme b. Heme b-binding residues include His182 and His196. His201 is an a ubiquinone binding site. Transmembrane regions (helical) follow at residues 226-246 (TKDF…ALFY), 288-308 (LGGV…PFLQ), 320-340 (LSQF…WIGG), and 347-367 (FINI…FIMP).

Belongs to the cytochrome b family. As to quaternary structure, the cytochrome bc1 complex contains 11 subunits: 3 respiratory subunits (MT-CYB, CYC1 and UQCRFS1), 2 core proteins (UQCRC1 and UQCRC2) and 6 low-molecular weight proteins (UQCRH/QCR6, UQCRB/QCR7, UQCRQ/QCR8, UQCR10/QCR9, UQCR11/QCR10 and a cleavage product of UQCRFS1). This cytochrome bc1 complex then forms a dimer. The cofactor is heme b.

It localises to the mitochondrion inner membrane. Component of the ubiquinol-cytochrome c reductase complex (complex III or cytochrome b-c1 complex) that is part of the mitochondrial respiratory chain. The b-c1 complex mediates electron transfer from ubiquinol to cytochrome c. Contributes to the generation of a proton gradient across the mitochondrial membrane that is then used for ATP synthesis. This Lepilemur dorsalis (Grey-backed sportive lemur) protein is Cytochrome b (MT-CYB).